We begin with the raw amino-acid sequence, 116 residues long: Iron-sulfur cluster insertion protein ErpA (116 aa).

The iron-sulfur cluster site is built by Cys44, Cys108, and Cys110.

Belongs to the HesB/IscA family. In terms of assembly, homodimer. The cofactor is iron-sulfur cluster.

In terms of biological role, required for insertion of 4Fe-4S clusters for at least IspG. This is Iron-sulfur cluster insertion protein ErpA from Francisella tularensis subsp. mediasiatica (strain FSC147).